Reading from the N-terminus, the 30-residue chain is Nattererin-1 (30 aa).

As to expression, expressed by the skin glands.

It is found in the secreted. Probably has antibacterial activity. In Physalaemus nattereri (Cuyaba dwarf frog), this protein is Nattererin-1.